A 407-amino-acid polypeptide reads, in one-letter code: Cytochrome P450 NovI (407 aa).

Heme is bound at residue cysteine 357.

It belongs to the cytochrome P450 family. The cofactor is heme.

It functions in the pathway antibiotic biosynthesis; novobiocin biosynthesis. Together with NovH, involved in the formation of a beta-OH-Tyr intermediate in the novobiocin biosynthesis pathway, an aminocoumarin family antibiotic that targets bacterial DNA gyrases. Acts as a cytochrome P450-type monooxygenase with specificity for the tyrosyl-S-NovH acyl enzyme (L-Tyr-S-NovH) to form the beta-OH-Tyr intermediate (L-beta-OH-Tyr-S-NovH). The protein is Cytochrome P450 NovI (novI) of Streptomyces niveus (Streptomyces spheroides).